We begin with the raw amino-acid sequence, 403 residues long: Tyrosine--tRNA ligase (403 aa).

A 'HIGH' region motif is present at residues 42-51 (PTAPDLHLGH). Positions 226-230 (KMSKS) match the 'KMSKS' region motif. Lysine 229 contributes to the ATP binding site. The region spanning 339 to 400 (LRLAGLLTAA…GKRNFARVSL (62 aa)) is the S4 RNA-binding domain.

This sequence belongs to the class-I aminoacyl-tRNA synthetase family. TyrS type 2 subfamily. As to quaternary structure, homodimer.

It localises to the cytoplasm. The catalysed reaction is tRNA(Tyr) + L-tyrosine + ATP = L-tyrosyl-tRNA(Tyr) + AMP + diphosphate + H(+). Functionally, catalyzes the attachment of tyrosine to tRNA(Tyr) in a two-step reaction: tyrosine is first activated by ATP to form Tyr-AMP and then transferred to the acceptor end of tRNA(Tyr). The polypeptide is Tyrosine--tRNA ligase (Xanthomonas axonopodis pv. citri (strain 306)).